A 225-amino-acid polypeptide reads, in one-letter code: 7-cyano-7-deazaguanine synthase (225 aa).

Residue Leu10–Ala20 coordinates ATP. Zn(2+)-binding residues include Cys191, Cys199, Cys202, and Cys205.

This sequence belongs to the QueC family. Requires Zn(2+) as cofactor.

The enzyme catalyses 7-carboxy-7-deazaguanine + NH4(+) + ATP = 7-cyano-7-deazaguanine + ADP + phosphate + H2O + H(+). It participates in purine metabolism; 7-cyano-7-deazaguanine biosynthesis. In terms of biological role, catalyzes the ATP-dependent conversion of 7-carboxy-7-deazaguanine (CDG) to 7-cyano-7-deazaguanine (preQ(0)). In Prochlorococcus marinus (strain NATL2A), this protein is 7-cyano-7-deazaguanine synthase.